Here is a 211-residue protein sequence, read N- to C-terminus: Proteasome subunit beta 1 (211 aa).

The propeptide at 1–17 is removed in mature form; by autocatalysis; that stretch reads MVIMGNELQLENKILKG. T18 acts as the Nucleophile in catalysis.

Belongs to the peptidase T1B family. As to quaternary structure, the 20S proteasome core is composed of 14 alpha and 14 beta subunits that assemble into four stacked heptameric rings, resulting in a barrel-shaped structure. The two inner rings, each composed of seven catalytic beta subunits, are sandwiched by two outer rings, each composed of seven alpha subunits. The catalytic chamber with the active sites is on the inside of the barrel. Has a gated structure, the ends of the cylinder being occluded by the N-termini of the alpha-subunits. Is capped at one or both ends by the proteasome regulatory ATPase, PAN.

It is found in the cytoplasm. The catalysed reaction is Cleavage of peptide bonds with very broad specificity.. The formation of the proteasomal ATPase PAN-20S proteasome complex, via the docking of the C-termini of PAN into the intersubunit pockets in the alpha-rings, triggers opening of the gate for substrate entry. Interconversion between the open-gate and close-gate conformations leads to a dynamic regulation of the 20S proteasome proteolysis activity. Component of the proteasome core, a large protease complex with broad specificity involved in protein degradation. In Saccharolobus islandicus (strain M.16.27) (Sulfolobus islandicus), this protein is Proteasome subunit beta 1.